The primary structure comprises 188 residues: Large ribosomal subunit protein eL18A (188 aa).

Residues 153-188 (GKAPSTPHSRTKPYVLSKGRKFERARGRRASRGYKN) form a disordered region. Residues 178 to 188 (RGRRASRGYKN) show a composition bias toward basic residues.

This sequence belongs to the eukaryotic ribosomal protein eL18 family. In terms of assembly, component of the large ribosomal subunit.

It is found in the cytoplasm. Its function is as follows. Component of the large ribosomal subunit. The ribosome is a large ribonucleoprotein complex responsible for the synthesis of proteins in the cell. The sequence is that of Large ribosomal subunit protein eL18A (rpl18-a) from Xenopus laevis (African clawed frog).